Consider the following 514-residue polypeptide: Uridylate cyclase (514 aa).

2 consecutive Guanylate cyclase domains span residues 49–190 (VHMY…AKLA) and 286–428 (VSLY…EKRQ). A ribonucleoside 5'-triphosphate-binding positions include Tyr52, Arg105, Phe178, 184–188 (NHAAK), and 291–296 (DIDGFT). 3 residues coordinate Ca(2+): Asp291, Ile292, and Asp339. Asp291 lines the Mn(2+) pocket. The segment at 495-514 (IRADERQVQPHSRQKVDGSR) is disordered. A compositionally biased stretch (basic and acidic residues) spans 496–514 (RADERQVQPHSRQKVDGSR).

The protein belongs to the adenylyl cyclase class-4/guanylyl cyclase family. Pyrimidine cyclase subfamily. As to quaternary structure, monomer. A divalent metal cation is required as a cofactor.

It localises to the cytoplasm. It catalyses the reaction UTP = 3',5'-cyclic UMP + diphosphate. In terms of biological role, pycsar (pyrimidine cyclase system for antiphage resistance) provides immunity against bacteriophage. The pyrimidine cyclase (PycC) synthesizes cyclic nucleotides in response to infection; these serve as specific second messenger signals. The signals activate the adjacent effector, leading to bacterial cell death and abortive phage infection. A clade A Pycsar system. Its function is as follows. The pyrimidine cyclase gene of a two-gene Pycsar system, generates cyclic UMP (cUMP) from UTP, has little to no activity on ATP, CTP or GTP. Expression of this and adjacent effector PaPycTIR (AC P0DV41) probably confers resistance to bacteriophage. The genes are probably only expressed in response to bacteriophage infection. Does not have adenylyl or guanylyl cyclase activity. The polypeptide is Uridylate cyclase (Pseudomonas aeruginosa).